The primary structure comprises 366 residues: 3-dehydroquinate synthase (366 aa).

Residues 75 to 80 (DGEQYK), 109 to 113 (GVIGD), 133 to 134 (TT), Lys-146, Lys-155, and 173 to 176 (CLST) each bind NAD(+). Zn(2+) is bound by residues Glu-188, His-251, and His-268.

It belongs to the sugar phosphate cyclases superfamily. Dehydroquinate synthase family. NAD(+) serves as cofactor. It depends on Co(2+) as a cofactor. Requires Zn(2+) as cofactor.

It localises to the cytoplasm. The catalysed reaction is 7-phospho-2-dehydro-3-deoxy-D-arabino-heptonate = 3-dehydroquinate + phosphate. It participates in metabolic intermediate biosynthesis; chorismate biosynthesis; chorismate from D-erythrose 4-phosphate and phosphoenolpyruvate: step 2/7. Functionally, catalyzes the conversion of 3-deoxy-D-arabino-heptulosonate 7-phosphate (DAHP) to dehydroquinate (DHQ). The protein is 3-dehydroquinate synthase of Vibrio parahaemolyticus serotype O3:K6 (strain RIMD 2210633).